The following is a 2183-amino-acid chain: Genome polyprotein (2183 aa).

Glycine 2 carries N-myristoyl glycine; by host lipidation. Over 2–1493 (GAQVSTQKTG…HVSRAFICLQ (1492 aa)) the chain is Cytoplasmic. An amphipathic alpha-helix region spans residues 566–582 (FYQGPTEESVERAMGRV). Active-site for protease 2A activity residues include histidine 870 and aspartate 888. Residues cysteine 905 and cysteine 907 each coordinate Zn(2+). The For protease 2A activity role is filled by cysteine 959. Zn(2+) contacts are provided by cysteine 965 and histidine 967. Positions 1099-1171 (NNGWLKKFTE…EQSAPSQSDQ (73 aa)) are membrane-binding. The tract at residues 1099–1237 (NNGWLKKFTE…SPGAGKSVAT (139 aa)) is oligomerization. The RNA-binding stretch occupies residues 1120–1124 (AVKIQ). One can recognise an SF3 helicase domain in the interval 1203-1359 (EKKMSNYIQF…SMYSQNGKIN (157 aa)). Zn(2+) is bound by residues cysteine 1367, cysteine 1379, and cysteine 1384. The C4-type; degenerate zinc finger occupies 1367-1384 (CDEECCPVNFKRCCPLVC). The tract at residues 1411–1418 (EYNHRHSV) is RNA-binding. Residues 1422–1427 (LEALFQ) form an oligomerization region. An intramembrane segment occupies 1494–1509 (ALTTFVSVAGIIYIIY). Topologically, residues 1510–2183 (KLFAGFQGAY…TLRRKWLDSF (674 aa)) are cytoplasmic. An O-(5'-phospho-RNA)-tyrosine modification is found at tyrosine 1519. Positions 1539–1717 (GPAFEFAVAM…FSAGLLKHYF (179 aa)) constitute a Peptidase C3 domain. Catalysis depends on for protease 3C activity residues histidine 1578, glutamate 1609, and cysteine 1685. The 117-residue stretch at 1948–2064 (GHLIAFDYSG…SYPWPIDASL (117 aa)) folds into the RdRp catalytic domain. Residues aspartate 1954 and aspartate 2050 each contribute to the Mg(2+) site.

Belongs to the picornaviruses polyprotein family. As to quaternary structure, interacts with capsid protein VP1 and capsid protein VP3 to form heterotrimeric protomers. In terms of assembly, interacts with capsid protein VP0, and capsid protein VP3 to form heterotrimeric protomers. Five protomers subsequently associate to form pentamers which serve as building blocks for the capsid. Interacts with capsid protein VP2, capsid protein VP3 and capsid protein VP4 following cleavage of capsid protein VP0. Interacts with host CXADR. Interacts with capsid protein VP1 and capsid protein VP3 in the mature capsid. As to quaternary structure, interacts with capsid protein VP0 and capsid protein VP1 to form heterotrimeric protomers. Five protomers subsequently associate to form pentamers which serve as building blocks for the capsid. Interacts with capsid protein VP4 in the mature capsid. Interacts with protein 2C; this interaction may be important for virion morphogenesis. In terms of assembly, interacts with capsid protein VP1 and capsid protein VP3. Homodimer. As to quaternary structure, homohexamer; forms a hexameric ring structure with 6-fold symmetry characteristic of AAA+ ATPases. Interacts (via N-terminus) with host RTN3 (via reticulon domain); this interaction is important for viral replication. Interacts with capsid protein VP3; this interaction may be important for virion morphogenesis. In terms of assembly, interacts with protein 3CD. Homodimer. Interacts with host GBF1. Interacts (via GOLD domain) with host ACBD3 (via GOLD domain); this interaction allows the formation of a viral protein 3A/ACBD3 heterotetramer with a 2:2 stoichiometry, which will stimulate the recruitment of host PI4KB in order to synthesize PI4P at the viral RNA replication sites. As to quaternary structure, interacts with RNA-directed RNA polymerase. In terms of assembly, interacts with protein 3AB and with RNA-directed RNA polymerase. Interacts with Viral protein genome-linked and with protein 3CD. It depends on Mg(2+) as a cofactor. In terms of processing, specific enzymatic cleavages in vivo by the viral proteases yield processing intermediates and the mature proteins. Post-translationally, myristoylation is required for the formation of pentamers during virus assembly. Further assembly of 12 pentamers and a molecule of genomic RNA generates the provirion. During virion maturation, immature virions are rendered infectious following cleavage of VP0 into VP4 and VP2. This maturation seems to be an autocatalytic event triggered by the presence of RNA in the capsid and it is followed by a conformational change infectious virion. In terms of processing, myristoylation is required during RNA encapsidation and formation of the mature virus particle. Post-translationally, VPg is uridylylated by the polymerase into VPg-pUpU. This acts as a nucleotide-peptide primer for the genomic RNA replication.

The protein resides in the virion. It localises to the host cytoplasm. The protein localises to the host cytoplasmic vesicle membrane. Its subcellular location is the host nucleus. The enzyme catalyses a ribonucleoside 5'-triphosphate + H2O = a ribonucleoside 5'-diphosphate + phosphate + H(+). It catalyses the reaction Selective cleavage of Tyr-|-Gly bond in the picornavirus polyprotein.. The catalysed reaction is RNA(n) + a ribonucleoside 5'-triphosphate = RNA(n+1) + diphosphate. It carries out the reaction Selective cleavage of Gln-|-Gly bond in the poliovirus polyprotein. In other picornavirus reactions Glu may be substituted for Gln, and Ser or Thr for Gly.. With respect to regulation, replication or transcription is subject to high level of random mutations by the nucleotide analog ribavirin. Its function is as follows. Forms an icosahedral capsid of pseudo T=3 symmetry with capsid proteins VP2 and VP3. The capsid is 300 Angstroms in diameter, composed of 60 copies of each capsid protein and enclosing the viral positive strand RNA genome. Capsid protein VP1 mainly forms the vertices of the capsid. Capsid protein VP1 interacts with host CXADR to provide virion attachment to target host cells. This attachment induces virion internalization. Tyrosine kinases are probably involved in the entry process. After binding to its receptor, the capsid undergoes conformational changes. Capsid protein VP1 N-terminus (that contains an amphipathic alpha-helix) and capsid protein VP4 are externalized. Together, they shape a pore in the host membrane through which viral genome is translocated to host cell cytoplasm. Functionally, forms an icosahedral capsid of pseudo T=3 symmetry with capsid proteins VP2 and VP3. The capsid is 300 Angstroms in diameter, composed of 60 copies of each capsid protein and enclosing the viral positive strand RNA genome. In terms of biological role, lies on the inner surface of the capsid shell. After binding to the host receptor, the capsid undergoes conformational changes. Capsid protein VP4 is released, Capsid protein VP1 N-terminus is externalized, and together, they shape a pore in the host membrane through which the viral genome is translocated into the host cell cytoplasm. Component of immature procapsids, which is cleaved into capsid proteins VP4 and VP2 after maturation. Allows the capsid to remain inactive before the maturation step. Its function is as follows. Cysteine protease that cleaves viral polyprotein and specific host proteins. It is responsible for the autocatalytic cleavage between the P1 and P2 regions, which is the first cleavage occurring in the polyprotein. Also cleaves the host translation initiation factor EIF4G1, in order to shut down the capped cellular mRNA translation. Inhibits the host nucleus-cytoplasm protein and RNA trafficking by cleaving host members of the nuclear pores. Counteracts stress granule formation probably by antagonizing its assembly or promoting its dissassembly. Cleaves and inhibits host IFIH1/MDA5, thereby inhibiting the type-I IFN production and the establishment of the antiviral state. Cleaves and inhibits host MAVS, thereby inhibiting the type-I IFN production and the establishment of the antiviral state. Functionally, plays an essential role in the virus replication cycle by acting as a viroporin. Creates a pore in the host endoplasmic reticulum and as a consequence releases Ca2+ in the cytoplasm of infected cell. In turn, high levels of cytoplasmic calcium may trigger membrane trafficking and transport of viral ER-associated proteins to viroplasms, sites of viral genome replication. In terms of biological role, induces and associates with structural rearrangements of intracellular membranes. Displays RNA-binding, nucleotide binding and NTPase activities. May play a role in virion morphogenesis and viral RNA encapsidation by interacting with the capsid protein VP3. Localizes the viral replication complex to the surface of membranous vesicles. Together with protein 3CD binds the Cis-Active RNA Element (CRE) which is involved in RNA synthesis initiation. Acts as a cofactor to stimulate the activity of 3D polymerase, maybe through a nucleid acid chaperone activity. Its function is as follows. Localizes the viral replication complex to the surface of membranous vesicles. It inhibits host cell endoplasmic reticulum-to-Golgi apparatus transport and causes the disassembly of the Golgi complex, possibly through GBF1 interaction. This would result in depletion of MHC, trail receptors and IFN receptors at the host cell surface. Plays an essential role in viral RNA replication by recruiting ACBD3 and PI4KB at the viral replication sites, thereby allowing the formation of the rearranged membranous structures where viral replication takes place. Functionally, acts as a primer for viral RNA replication and remains covalently bound to viral genomic RNA. VPg is uridylylated prior to priming replication into VPg-pUpU. The oriI viral genomic sequence may act as a template for this. The VPg-pUpU is then used as primer on the genomic RNA poly(A) by the RNA-dependent RNA polymerase to replicate the viral genome. During genome replication, the VPg-RNA linkage is removed by the host TDP2, thereby accelerating replication. During the late stage of the replication cycle, host TDP2 is excluded from sites of viral RNA synthesis and encapsidation, allowing for the generation of progeny virions. In terms of biological role, involved in the viral replication complex and viral polypeptide maturation. It exhibits protease activity with a specificity and catalytic efficiency that is different from protease 3C. Protein 3CD lacks polymerase activity. Protein 3CD binds to the 5'UTR of the viral genome. Replicates the viral genomic RNA on the surface of intracellular membranes. May form linear arrays of subunits that propagate along a strong head-to-tail interaction called interface-I. Covalently attaches UMP to a tyrosine of VPg, which is used to prime RNA synthesis. The positive stranded RNA genome is first replicated at virus induced membranous vesicles, creating a dsRNA genomic replication form. This dsRNA is then used as template to synthesize positive stranded RNA genomes. ss(+)RNA genomes are either translated, replicated or encapsidated. Its function is as follows. Major viral protease that mediates proteolytic processing of the polyprotein. Cleaves host EIF5B, contributing to host translation shutoff. Also cleaves host PABPC1, contributing to host translation shutoff. Cleaves host NLRP1, triggers host N-glycine-mediated degradation of the autoinhibitory NLRP1 N-terminal fragment. In Coxsackievirus B4 (strain JVB / Benschoten / New York/51), this protein is Genome polyprotein.